Reading from the N-terminus, the 105-residue chain is Intermembrane phospholipid transport system binding protein MlaB (105 aa).

In terms of domain architecture, STAS spans 4-105 (WDLQKNNDKI…GLSDWIANFI (102 aa)).

As to quaternary structure, the complex is composed of two ATP-binding proteins (MlaF), two transmembrane proteins (MlaE), two cytoplasmic solute-binding proteins (MlaB) and six periplasmic solute-binding proteins (MlaD).

Its subcellular location is the cytoplasm. In terms of biological role, part of the ABC transporter complex MlaFEDB, which is involved in a phospholipid transport pathway that maintains lipid asymmetry in the outer membrane by retrograde trafficking of phospholipids from the outer membrane to the inner membrane. MlaB plays critical roles in both the assembly and activity of the complex. May act by modulating MlaF structure and stability. This chain is Intermembrane phospholipid transport system binding protein MlaB, found in Haemophilus influenzae (strain ATCC 51907 / DSM 11121 / KW20 / Rd).